Consider the following 391-residue polypeptide: Arginine biosynthesis bifunctional protein ArgJ (391 aa).

The substrate site is built by Thr-149, Lys-172, Thr-183, Glu-263, Asn-386, and Ser-391. Residue Thr-183 is the Nucleophile of the active site.

The protein belongs to the ArgJ family. In terms of assembly, heterotetramer of two alpha and two beta chains.

It localises to the cytoplasm. It catalyses the reaction N(2)-acetyl-L-ornithine + L-glutamate = N-acetyl-L-glutamate + L-ornithine. It carries out the reaction L-glutamate + acetyl-CoA = N-acetyl-L-glutamate + CoA + H(+). The protein operates within amino-acid biosynthesis; L-arginine biosynthesis; L-ornithine and N-acetyl-L-glutamate from L-glutamate and N(2)-acetyl-L-ornithine (cyclic): step 1/1. It functions in the pathway amino-acid biosynthesis; L-arginine biosynthesis; N(2)-acetyl-L-ornithine from L-glutamate: step 1/4. In terms of biological role, catalyzes two activities which are involved in the cyclic version of arginine biosynthesis: the synthesis of N-acetylglutamate from glutamate and acetyl-CoA as the acetyl donor, and of ornithine by transacetylation between N(2)-acetylornithine and glutamate. This is Arginine biosynthesis bifunctional protein ArgJ from Bifidobacterium longum (strain NCC 2705).